Consider the following 67-residue polypeptide: MPKMKTKSSVKKRFKITATGKVMCGPGNKRHGLINRPQKMKRTNRGPQTMTDMDAKTIKQWAPYGLS.

The segment at 21 to 50 is disordered; sequence KVMCGPGNKRHGLINRPQKMKRTNRGPQTM. Basic residues predominate over residues 28 to 44; it reads NKRHGLINRPQKMKRTN.

This sequence belongs to the bacterial ribosomal protein bL35 family.

The sequence is that of Large ribosomal subunit protein bL35 from Gluconobacter oxydans (strain 621H) (Gluconobacter suboxydans).